The following is a 137-amino-acid chain: uncharacterized protein (137 aa).

Positions 1 to 32 (MRDHLPPGLPPDPFADDPCDPSAALDAVEPGQ) are disordered.

To M.tuberculosis Rv3412.

This is an uncharacterized protein from Mycobacterium leprae (strain TN).